The chain runs to 130 residues: Small ribosomal subunit protein uS9 (130 aa).

Positions 101–110 (AGFLTRDPRM) are enriched in basic and acidic residues. The segment at 101-130 (AGFLTRDPRMKERKKYGLKKARRAPQFSKR) is disordered. A compositionally biased stretch (basic residues) spans 111-130 (KERKKYGLKKARRAPQFSKR).

It belongs to the universal ribosomal protein uS9 family.

This chain is Small ribosomal subunit protein uS9, found in Clostridium tetani (strain Massachusetts / E88).